We begin with the raw amino-acid sequence, 101 residues long: Small ribosomal subunit protein uS14 (101 aa).

This sequence belongs to the universal ribosomal protein uS14 family. Part of the 30S ribosomal subunit. Contacts proteins S3 and S10.

In terms of biological role, binds 16S rRNA, required for the assembly of 30S particles and may also be responsible for determining the conformation of the 16S rRNA at the A site. The sequence is that of Small ribosomal subunit protein uS14 from Paracoccus denitrificans (strain Pd 1222).